Here is a 127-residue protein sequence, read N- to C-terminus: Glycine cleavage system H protein (127 aa).

One can recognise a Lipoyl-binding domain in the interval glutamate 22–lysine 104. N6-lipoyllysine is present on lysine 63.

The protein belongs to the GcvH family. In terms of assembly, the glycine cleavage system is composed of four proteins: P, T, L and H. (R)-lipoate serves as cofactor.

Its function is as follows. The glycine cleavage system catalyzes the degradation of glycine. The H protein shuttles the methylamine group of glycine from the P protein to the T protein. The sequence is that of Glycine cleavage system H protein from Nitratidesulfovibrio vulgaris (strain DP4) (Desulfovibrio vulgaris).